The chain runs to 100 residues: Large ribosomal subunit protein bL28 (100 aa).

This sequence belongs to the bacterial ribosomal protein bL28 family.

This chain is Large ribosomal subunit protein bL28, found in Ehrlichia ruminantium (strain Gardel).